We begin with the raw amino-acid sequence, 89 residues long: Small ribosomal subunit protein uS15 (89 aa).

The protein belongs to the universal ribosomal protein uS15 family. In terms of assembly, part of the 30S ribosomal subunit. Forms a bridge to the 50S subunit in the 70S ribosome, contacting the 23S rRNA.

Its function is as follows. One of the primary rRNA binding proteins, it binds directly to 16S rRNA where it helps nucleate assembly of the platform of the 30S subunit by binding and bridging several RNA helices of the 16S rRNA. Forms an intersubunit bridge (bridge B4) with the 23S rRNA of the 50S subunit in the ribosome. This chain is Small ribosomal subunit protein uS15, found in Gluconobacter oxydans (strain 621H) (Gluconobacter suboxydans).